The following is a 156-amino-acid chain: Endoribonuclease YbeY (156 aa).

Positions 122, 126, and 132 each coordinate Zn(2+).

This sequence belongs to the endoribonuclease YbeY family. Zn(2+) serves as cofactor.

The protein localises to the cytoplasm. Single strand-specific metallo-endoribonuclease involved in late-stage 70S ribosome quality control and in maturation of the 3' terminus of the 16S rRNA. The polypeptide is Endoribonuclease YbeY (Bacillus cereus (strain ZK / E33L)).